We begin with the raw amino-acid sequence, 139 residues long: 3-hydroxyacyl-[acyl-carrier-protein] dehydratase FabZ (139 aa).

Residue His-47 is part of the active site.

This sequence belongs to the thioester dehydratase family. FabZ subfamily.

It is found in the cytoplasm. The enzyme catalyses a (3R)-hydroxyacyl-[ACP] = a (2E)-enoyl-[ACP] + H2O. Involved in unsaturated fatty acids biosynthesis. Catalyzes the dehydration of short chain beta-hydroxyacyl-ACPs and long chain saturated and unsaturated beta-hydroxyacyl-ACPs. The polypeptide is 3-hydroxyacyl-[acyl-carrier-protein] dehydratase FabZ (Clostridium perfringens (strain ATCC 13124 / DSM 756 / JCM 1290 / NCIMB 6125 / NCTC 8237 / Type A)).